A 258-amino-acid chain; its full sequence is Leucine-rich repeat-containing protein 3B (258 aa).

The signal sequence occupies residues 1–33; the sequence is MTPLDLWLSRSIPMCLLLQSLVLMVLCFPSAST. The LRRNT domain maps to 34 to 68; sequence CPKGCTCQRSESPPHGLNVTCSLSRLKEIPPDVPP. A glycan (N-linked (GlcNAc...) asparagine) is linked at asparagine 51. LRR repeat units lie at residues 69-90, 93-114, and 118-139; these read DTQL…IFHG, MLRR…AFIG, and SLEV…AFAR. Asparagine 98 carries an N-linked (GlcNAc...) asparagine glycan. One can recognise an LRRCT domain in the interval 149–196; the sequence is NPWHCDCALQQALGGMAHNHERVLCRSSELRDQEGQPFMAVDADLCNL. Residues 204-224 form a helical membrane-spanning segment; that stretch reads AMLVTMFGWFAMVISYVVYYV.

It belongs to the LRRC3 family.

Its subcellular location is the membrane. The sequence is that of Leucine-rich repeat-containing protein 3B (lrrc3b) from Danio rerio (Zebrafish).